Reading from the N-terminus, the 375-residue chain is MSTAGKVIKCKAAVLWEVKKPFSIEDVEVAPPKAYEVRIKMVAVGICHTDDHVVSGNLVTPLPVILGHEAAGIVESVGEGVTTVKPGDKVIPLFTPQCGKCRVCKNPESNYCLKNDLGNPRGTLQDGTRRFTCRGKPIHHFLGTSTFSQYTVVDENAVAKIDAASPLEKVCLIGCGFSTGYGSAVNVAKVTPGSTCAVFGLGGVGLSAVMGCKAAGAARIIAVDINKDKFAKAKELGATECINPQDYKKPIQEVLKEMTDGGVDFSFEVIGRLDTMMASLLCCHEACGTSVIVGVPPASQNLSINPMLLLTGRTWKGAVYGGFKSKEGIPKLVADFMAKKFSLDALITHVLPFEKINEGFDLLHSGKSIRTVLTF.

Serine 2 bears the N-acetylserine mark. Serine 23 is subject to Phosphoserine. Tyrosine 35 bears the Phosphotyrosine mark. Positions 47, 68, 98, 101, 104, 112, and 175 each coordinate Zn(2+). NAD(+)-binding positions include 200-205, aspartate 224, lysine 229, 293-295, and arginine 370; these read GLGGVG and VGV.

The protein belongs to the zinc-containing alcohol dehydrogenase family. In terms of assembly, dimer of identical or non-identical chains of three types; alpha, beta and gamma. The cofactor is Zn(2+).

It is found in the cytoplasm. It catalyses the reaction all-trans-retinol + NAD(+) = all-trans-retinal + NADH + H(+). It carries out the reaction all-trans-4-hydroxyretinol + NAD(+) = all-trans-4-hydroxyretinal + NADH + H(+). The catalysed reaction is all-trans-4-oxoretinol + NAD(+) = all-trans-4-oxoretinal + NADH + H(+). Catalyzes the NAD-dependent oxidation of all-trans-retinol and its derivatives such as all-trans-4-hydroxyretinol and may participate in retinoid metabolism. In vitro can also catalyze the NADH-dependent reduction of all-trans-retinal and its derivatives such as all-trans-4-oxoretinal. Catalyzes in the oxidative direction with higher efficiency. Has the same affinity for all-trans-4-hydroxyretinol and all-trans-4-oxoretinal. The protein is All-trans-retinol dehydrogenase [NAD(+)] ADH1B of Homo sapiens (Human).